Here is a 588-residue protein sequence, read N- to C-terminus: Disabled homolog 1 (588 aa).

A disordered region spans residues 1-26 (MSTETELQVAVKTSAKKDSRKKGQDR). The segment covering 15-26 (AKKDSRKKGQDR) has biased composition (basic and acidic residues). A PID domain is found at 36-189 (KGEGVRYKAK…CEQAVYQTIL (154 aa)). Y198, Y220, and Y232 each carry phosphotyrosine. 3 disordered regions span residues 417 to 443 (LTPL…RQKM), 451 to 470 (FQMA…PSLT), and 502 to 588 (LTPV…QAGS). The segment covering 424 to 436 (PGTSDSTRSSPQT) has biased composition (polar residues). Low complexity-rich tracts occupy residues 503–512 (TPVTSTTPST) and 520–534 (PRQS…SHAS). Phosphoserine; by CDK5 is present on S524. Residues 537 to 546 (TTDDIFEEGF) are compositionally biased toward acidic residues.

In terms of assembly, associates with the SH2 domains of SRC, FYN and ABL. Interacts (phosphorylated on tyrosine residues) with CRK and CRKL (via respective SH2 domain). Interacts with SIAH1, LRP8 and VLDLR. Interacts with LRP1. Interacts with APLP1 (via NPXY motif). Interacts with DAB2IP. Interacts with ZSWIM8. Phosphorylated by FYN on Tyr-198 and Tyr-220 upon reelin induction in embryonic neurons. Also phosphorylated on Ser-524 independently of reelin signaling. Post-translationally, ubiquitinated by various cullin-5-RING E3 ubiquitin-protein ligase complexes (ECS complexes) following ligand-binding and phosphorylation, leading to its degradation. Ubiquitinated by the ECS(SOCS7) complex in the cortical plate of the developing cerebral cortex following ligand-binding and phosphorylation by FYN, leading to its degradation by the proteasome. Recognized by ZSWIM8 through a disorder targets misorder mechanism that eliminates misfolded DAB1 via ubiquitination and proteasomal degradation. As to expression, mainly expressed in brain.

It localises to the cytoplasm. Signaling adapter of the reelin-mediated signaling pathway, which regulates the migration and differentiation of postmitotic neurons during brain development. Mediates intracellular transduction of Reelin signaling following reelin (RELN)-binding to its receptor: acts by docking proteins through its phosphotyrosine residues and PID domain. This is Disabled homolog 1 (DAB1) from Homo sapiens (Human).